Consider the following 194-residue polypeptide: uncharacterized protein (194 aa).

Residues 1-15 (MFVLSIALLSCTTLC) form the signal peptide. The PAN domain occupies 49 to 134 (CPQGLHADAI…KATYYEKIRC (86 aa)). 2 disulfide bridges follow: Cys-49/Cys-134 and Cys-79/Cys-106.

This is an uncharacterized protein from Caenorhabditis elegans.